We begin with the raw amino-acid sequence, 449 residues long: Malonyl-CoA:anthocyanidin 5-O-glucoside-6''-O-malonyltransferase (449 aa).

Methionine 1 is modified (N-acetylmethionine). Residues histidine 162 and aspartate 394 each act as proton acceptor in the active site.

It belongs to the plant acyltransferase family. As to expression, expressed in flowers. Detected in leaves, stems, roots and siliques.

It carries out the reaction anthocyanin A3 + malonyl-CoA = anthocyanin A5 + CoA. It catalyses the reaction anthocyanin A7 + malonyl-CoA = anthocyanin A9 + CoA. The catalysed reaction is anthocyanin A6 + malonyl-CoA = anthocyanin A8 + CoA. The enzyme catalyses anthocyanin A10 + malonyl-CoA = anthocyanin A11 + CoA. Functionally, catalyzes the malonylation of the 5-O-glucose residue of anthocyanins, using malonyl-CoA as the malonyl donor. Acts only on anthocyanin substrates containing a 5-O-glucosyl moiety. Acts on the four native A.thaliana anthocyanins, A3, A7, and to a lesser extent, A6 and A10. Can also use the non-native anthocyanin compounds cyanin (cyanidin 3,5-diglucoside), malvin, pelargonidin 3,5-diglucoside, peonidin 3,5-diglucoside, cyanidin 3-coumaroylglucoside 5-glucoside, delphinidin 3-coumaroylrutinoside 5-glucoside and petunidin 3-coumaroylrutinoside 5-glucoside as substrates. Is the sole enzyme responsible for producing malonylated anthocyanin 5-O-glucosides in A.thaliana. Is not able to catalyze acyl transfer using acetyl-CoA, butyryl-CoA, hexanoyl-CoA, benzoyl-CoA, cinnamoyl-CoA, methylmalonyl-CoA, succinyl-CoA, p-coumaroyl-CoA or caffeoyl-CoA. The protein is Malonyl-CoA:anthocyanidin 5-O-glucoside-6''-O-malonyltransferase (5MAT) of Arabidopsis thaliana (Mouse-ear cress).